We begin with the raw amino-acid sequence, 207 residues long: Large ribosomal subunit protein uL4 (207 aa).

The tract at residues 45 to 89 (RQGTHKVKTRSEVRGGGRKPWRQKGTGRARQGSIRSPQWRGGGTV) is disordered. Over residues 60-71 (GGRKPWRQKGTG) the composition is skewed to basic residues.

Belongs to the universal ribosomal protein uL4 family. Part of the 50S ribosomal subunit.

One of the primary rRNA binding proteins, this protein initially binds near the 5'-end of the 23S rRNA. It is important during the early stages of 50S assembly. It makes multiple contacts with different domains of the 23S rRNA in the assembled 50S subunit and ribosome. Its function is as follows. Forms part of the polypeptide exit tunnel. In Bacillus mycoides (strain KBAB4) (Bacillus weihenstephanensis), this protein is Large ribosomal subunit protein uL4.